A 90-amino-acid chain; its full sequence is DNA-directed RNA polymerase subunit omega (90 aa).

The protein belongs to the RNA polymerase subunit omega family. As to quaternary structure, the RNAP catalytic core consists of 2 alpha, 1 beta, 1 beta' and 1 omega subunit. When a sigma factor is associated with the core the holoenzyme is formed, which can initiate transcription.

It catalyses the reaction RNA(n) + a ribonucleoside 5'-triphosphate = RNA(n+1) + diphosphate. Functionally, promotes RNA polymerase assembly. Latches the N- and C-terminal regions of the beta' subunit thereby facilitating its interaction with the beta and alpha subunits. The sequence is that of DNA-directed RNA polymerase subunit omega from Hamiltonella defensa subsp. Acyrthosiphon pisum (strain 5AT).